The primary structure comprises 213 residues: UPF0111 protein TM_0914 (213 aa).

This sequence belongs to the UPF0111 family.

This chain is UPF0111 protein TM_0914, found in Thermotoga maritima (strain ATCC 43589 / DSM 3109 / JCM 10099 / NBRC 100826 / MSB8).